The sequence spans 464 residues: L-cystine uptake protein TcyP (464 aa).

Transmembrane regions (helical) follow at residues 3 to 23 (TLLVGINVAVMLILVGVLYYM), 34 to 54 (VFTALGVGIIFGLILQFIYEP), 73 to 93 (YVKLLQMIVMPLILVSIISAF), 107 to 127 (GLIIGILILTTGIAAAVGIAA), 184 to 204 (PTSTISVVIFAAFIGIAFIGV), 225 to 245 (IVMRMVTLILRLTPYGVLALM), 263 to 283 (FVLASYVALIVMFVIHLLLIA), 347 to 367 (AGIYPAMLAMMVAPTVGIDPL), 371 to 391 (FILTLIAVVAISSFGVAGVGG), and 395 to 415 (FAALIVLSTMNLPIGIVALVI).

It belongs to the dicarboxylate/amino acid:cation symporter (DAACS) (TC 2.A.23) family.

It localises to the membrane. Mediates uptake of L-cystine, the oxidized form of L-cysteine. This chain is L-cystine uptake protein TcyP, found in Bacillus cereus (strain ATCC 10987 / NRS 248).